The following is a 488-amino-acid chain: uncharacterized protein (488 aa).

12 helical membrane passes run 2–22 (FGLP…VFLV), 27–47 (VHAF…GGMS), 59–79 (FGGT…MGSV), 106–126 (LAIT…FVIL), 176–196 (IGAM…GIVL), 241–261 (LLPI…HLFV), 275–295 (IVSF…ISVY), 314–334 (VKTA…GAVL), 347–367 (IANL…LVRF), 368–388 (IQGS…PILA), 438–458 (VPTT…NLIF), and 461–481 (DGSV…LFYI).

It belongs to the GntP permease family.

The protein localises to the cell inner membrane. This is an uncharacterized protein from Haemophilus influenzae (strain ATCC 51907 / DSM 11121 / KW20 / Rd).